The following is a 73-amino-acid chain: Large ribosomal subunit protein uL24 (73 aa).

Positions 51–65 are enriched in basic and acidic residues; sequence DDNPKGGFIHKEKPM. A disordered region spans residues 51-73; the sequence is DDNPKGGFIHKEKPMHISNVKKA.

This sequence belongs to the universal ribosomal protein uL24 family. As to quaternary structure, part of the 50S ribosomal subunit.

In terms of biological role, one of two assembly initiator proteins, it binds directly to the 5'-end of the 23S rRNA, where it nucleates assembly of the 50S subunit. One of the proteins that surrounds the polypeptide exit tunnel on the outside of the subunit. The chain is Large ribosomal subunit protein uL24 from Helicobacter acinonychis (strain Sheeba).